A 327-amino-acid chain; its full sequence is Methionyl-tRNA formyltransferase (327 aa).

A (6S)-5,6,7,8-tetrahydrofolate-binding site is contributed by 121–124 (SLLP).

Belongs to the Fmt family.

It carries out the reaction L-methionyl-tRNA(fMet) + (6R)-10-formyltetrahydrofolate = N-formyl-L-methionyl-tRNA(fMet) + (6S)-5,6,7,8-tetrahydrofolate + H(+). Attaches a formyl group to the free amino group of methionyl-tRNA(fMet). The formyl group appears to play a dual role in the initiator identity of N-formylmethionyl-tRNA by promoting its recognition by IF2 and preventing the misappropriation of this tRNA by the elongation apparatus. This is Methionyl-tRNA formyltransferase from Burkholderia pseudomallei (strain 1710b).